The following is a 351-amino-acid chain: Peptide chain release factor 1 (351 aa).

At Gln230 the chain carries N5-methylglutamine.

The protein belongs to the prokaryotic/mitochondrial release factor family. Post-translationally, methylated by PrmC. Methylation increases the termination efficiency of RF1.

The protein resides in the cytoplasm. Peptide chain release factor 1 directs the termination of translation in response to the peptide chain termination codons UAG and UAA. The sequence is that of Peptide chain release factor 1 from Onion yellows phytoplasma (strain OY-M).